Reading from the N-terminus, the 203-residue chain is NADH-quinone oxidoreductase subunit C (203 aa).

It belongs to the complex I 30 kDa subunit family. As to quaternary structure, NDH-1 is composed of 14 different subunits. Subunits NuoB, C, D, E, F, and G constitute the peripheral sector of the complex.

It is found in the cell inner membrane. It catalyses the reaction a quinone + NADH + 5 H(+)(in) = a quinol + NAD(+) + 4 H(+)(out). Functionally, NDH-1 shuttles electrons from NADH, via FMN and iron-sulfur (Fe-S) centers, to quinones in the respiratory chain. The immediate electron acceptor for the enzyme in this species is believed to be ubiquinone. Couples the redox reaction to proton translocation (for every two electrons transferred, four hydrogen ions are translocated across the cytoplasmic membrane), and thus conserves the redox energy in a proton gradient. In Polaromonas sp. (strain JS666 / ATCC BAA-500), this protein is NADH-quinone oxidoreductase subunit C.